A 404-amino-acid polypeptide reads, in one-letter code: Subtilisin-like protease 3 (404 aa).

The first 20 residues, Met-1–Ser-20, serve as a signal peptide directing secretion. The propeptide occupies Ala-21–Tyr-114. Positions Ser-38 to Ser-112 constitute an Inhibitor I9 domain. The Peptidase S8 domain maps to Pro-123 to Tyr-404. N-linked (GlcNAc...) asparagine glycosylation occurs at Asn-133. Residues Asp-158 and His-190 each act as charge relay system in the active site. Asn-243, Asn-251, Asn-286, Asn-307, and Asn-340 each carry an N-linked (GlcNAc...) asparagine glycan. Ser-347 acts as the Charge relay system in catalysis. N-linked (GlcNAc...) asparagine glycosylation occurs at Asn-366.

It belongs to the peptidase S8 family.

Its subcellular location is the secreted. Secreted subtilisin-like serine endopeptidase. Mediates the degradation of collagen, the major structural protein in the mammalian host. Degrades the nonhelical regions of collagen that function in the cross-linking of the helical components. May function as virulence factor involved in epidermal wing necrosis observed in white nose syndrome (WNS) in bats. In Pseudogymnoascus destructans (strain ATCC MYA-4855 / 20631-21) (Bat white-nose syndrome fungus), this protein is Subtilisin-like protease 3.